Reading from the N-terminus, the 147-residue chain is Cystatin-9-like (147 aa).

An N-terminal signal peptide occupies residues 1-28 (MLGLPWKGGLSWALLLLLLGSQILLIYA). The cysteines at positions 98 and 108 are disulfide-linked. 2 N-linked (GlcNAc...) asparagine glycosylation sites follow: Asn-117 and Asn-139. Residues Cys-122 and Cys-142 are joined by a disulfide bond.

The protein belongs to the cystatin family. In terms of tissue distribution, specifically expressed in testis.

The protein localises to the secreted. In Homo sapiens (Human), this protein is Cystatin-9-like (CST9L).